We begin with the raw amino-acid sequence, 342 residues long: MALLDPHYPLGRHNTFRFEAAARYAAHVRAAQDIAEALTDPRARGLPVLVLGGGSNIVLTRDFDGLVLLMEIPGVQVGRATLDGRAVHTVTAGAGESWHGLVARTVADGLPGLENLALIPGTVGAAPIQNIGAYGVEIKDRFHSLRAYDRHAGEFVTLDAADCAFGYRDSLFKRAGADRYVIAEVTFALPVDWQPDTHYAELARELAARDIAAPAAQDIFDAVVAIRRRKLPDPAEIGNAGSFFKNPIVDTATRDALLARFPGLVGYAQPDGSYKLAAGWMIDQCGFKGRQSGAVGVYDKQALVLVHRGGGSAVQLMTLAREIQDTVHARFGVRIEPEPVVI.

One can recognise an FAD-binding PCMH-type domain in the interval 17 to 192 (RFEAAARYAA…AEVTFALPVD (176 aa)). Arg-168 is an active-site residue. Ser-242 serves as the catalytic Proton donor. Glu-338 is an active-site residue.

It belongs to the MurB family. Requires FAD as cofactor.

The protein localises to the cytoplasm. The enzyme catalyses UDP-N-acetyl-alpha-D-muramate + NADP(+) = UDP-N-acetyl-3-O-(1-carboxyvinyl)-alpha-D-glucosamine + NADPH + H(+). The protein operates within cell wall biogenesis; peptidoglycan biosynthesis. Its function is as follows. Cell wall formation. This chain is UDP-N-acetylenolpyruvoylglucosamine reductase, found in Ralstonia nicotianae (strain ATCC BAA-1114 / GMI1000) (Ralstonia solanacearum).